A 668-amino-acid polypeptide reads, in one-letter code: Acetoin catabolism regulatory protein (668 aa).

One can recognise a Sigma-54 factor interaction domain in the interval 341 to 570; sequence LTGGDAALQL…NVLEYARAVC (230 aa). ATP is bound by residues 369-376 and 433-442; these read GETGSGKE and ADGGTLFLDE. Over residues 586 to 606 the composition is skewed to low complexity; that stretch reads GPAPSAALPQPGPAQSPAAAP. Residues 586-611 are disordered; it reads GPAPSAALPQPGPAQSPAAAPFDPHQ. The H-T-H motif DNA-binding region spans 630-649; the sequence is LSAVARQIGVSRMTLYRRME.

In terms of biological role, required for sigma-54-dependent transcription of acoXABC. In Cupriavidus necator (strain ATCC 17699 / DSM 428 / KCTC 22496 / NCIMB 10442 / H16 / Stanier 337) (Ralstonia eutropha), this protein is Acetoin catabolism regulatory protein (acoR).